The chain runs to 341 residues: Basic membrane protein D (341 aa).

Residues 1–16 (MLKKVYYFLIFLFIVA) form the signal peptide. Cys17 is lipidated: N-palmitoyl cysteine. Cys17 carries the S-diacylglycerol cysteine lipid modification.

The protein belongs to the BMP lipoprotein family. In terms of assembly, monomer.

It is found in the cell inner membrane. Functionally, binds adenosine and inosine. May be part of an ABC-type nucleoside uptake system involved in the purine salvage pathway. The sequence is that of Basic membrane protein D from Borreliella burgdorferi (strain JD1) (Borrelia burgdorferi).